We begin with the raw amino-acid sequence, 305 residues long: Ribonuclease H (305 aa).

The enzyme catalyses Endonucleolytic cleavage to 5'-phosphomonoester.. Functionally, plays essential roles in DNA replication by removing the RNA primers from lagging strand fragments. Exhibits 5'to 3' exonuclease activity on either RNA/DNA or DNA/DNA duplexes and endonuclease activity on either flap or fork DNA structures. The protein is Ribonuclease H (rnh) of Enterobacteria phage T4 (Bacteriophage T4).